The primary structure comprises 1060 residues: MLNPSTSDIHTSPTAVGNGRKRPHPIADSGSAMPSDPSAQQLPHPANESAAIPSIASSSSFRNVSACNRCRQRKNRCDQRLPRCQACEKAGVRCVGYDPITKREIPRSYVYFLESRVAYLEKVLMDNGIEYNEAVAFDEEEAVKIEAGYEAYAGSANGPAAGEIAAQDGSNDKSVRIKKEKNGPLGLEKASRYDHDPEVKQDSDAEDGWRIQNLVSNIGMVSVQGTSDPRYLGSTSGISFARVVFAAVKSSVPGNSSERGPSRPKERLPHSATGTEGSTTRDSFFGLQTRPMMKCAAFPDRELAERLADLYFEHANPQIPIVHRVDFMELLDRTYSVDEKSRSPRSLYFLNIVFAIGSGIIFEDKPAEDQKEGRDHSPSATKRQRLSSRQYQPEEYHASAIVHLESFLSTSPTTDGFGALEELQAVLLLASFALLRPVAPGLWYIVGVAMRLAVDLGLHYEDGAGIDGPENDNMNRTNNKDGEKAKLRIDDHERGRREWVRDFRRRLWWCCYSFDRLVSCCVGRPFGISDQAISTEFPSILEDKYITKSGIIKAPEGAPSYKHSAFHYFKLRVLQSEIQDVLQHQQARFARQRGPPGARSFMRLDVVSPFLQGFDSFRSWRRDVDRRLLEWKNSAPMPSENGVRFPLEFLELNYWQAVIMLYQQSLTVPAELADELSPAEDVSSPSFSQVEEDEHDIYYKVAEAGQKVIRIYRQMHRVRLVNYTYLATHHIFMAGISFLYAIWHSPYVRSRLTLDEVDFTVLAATSVLRDLMHKCPPAEACRDAFERMSKATVEMSLSTTGFGPQVELNRVQTSTSGSRQFNATQSRSRPYSRQQAEQRQRQSASRRQLQMRQSRPLPRFDMNLEDLFGDNRAVAERQGSGGMGKLAQPYPVSETSDPNFARPQSHRNPSMEYYGPFENPVSPQQPQPQPRYYYNNSPQQSGSPGSVVAASGIPPYQVTPTEQENPSGMGLDYLDYDPTGIERQLSLGSEENSDFKFQGGAQSLGHGAGHNFGIDLGFGMAVDFQHDWSENANYDLLEGYFFGGAGATGPGHGHGHGSGI.

The segment covering 1 to 15 (MLNPSTSDIHTSPTA) has biased composition (polar residues). The segment at 1–48 (MLNPSTSDIHTSPTAVGNGRKRPHPIADSGSAMPSDPSAQQLPHPANE) is disordered. The zn(2)-C6 fungal-type DNA-binding region spans 67 to 94 (CNRCRQRKNRCDQRLPRCQACEKAGVRC). Disordered regions lie at residues 163 to 207 (EIAA…DAED), 251 to 282 (SVPGNSSERGPSRPKERLPHSATGTEGSTTRD), 367 to 391 (AEDQKEGRDHSPSATKRQRLSSRQY), 811 to 862 (VQTS…RFDM), and 877 to 969 (RQGS…PSGM). 3 stretches are compositionally biased toward basic and acidic residues: residues 170–182 (SNDKSVRIKKEKN), 189–207 (KASRYDHDPEVKQDSDAED), and 260–269 (GPSRPKERLP). A compositionally biased stretch (polar residues) spans 272 to 282 (ATGTEGSTTRD). Residues 367–377 (AEDQKEGRDHS) are compositionally biased toward basic and acidic residues. Positions 811–831 (VQTSTSGSRQFNATQSRSRPY) are enriched in polar residues. Low complexity-rich tracts occupy residues 832–859 (SRQQAEQRQRQSASRRQLQMRQSRPLPR) and 930–952 (PRYYYNNSPQQSGSPGSVVAASG).

It localises to the nucleus. Mediates the induction of a number of unlinked genes involved in purine utilization. Binds to the consensus sequence 5'-TCGGNNNNNNCCGA-3'. The sequence is that of Positive regulator of purine utilization (uaY) from Emericella nidulans (strain FGSC A4 / ATCC 38163 / CBS 112.46 / NRRL 194 / M139) (Aspergillus nidulans).